The primary structure comprises 456 residues: Bifunctional protein GlmU (456 aa).

Residues 1–228 form a pyrophosphorylase region; the sequence is MPQNTLNIVI…SYLAAGVNNK (228 aa). UDP-N-acetyl-alpha-D-glucosamine is bound by residues 11 to 14, K25, Q75, 80 to 81, 102 to 104, G138, E153, N168, and N226; these read LAAG, GT, and YGD. A Mg(2+)-binding site is contributed by D104. N226 serves as a coordination point for Mg(2+). The tract at residues 229-249 is linker; that stretch reads LQLAELERIFQTEQAQELLKA. The tract at residues 250–456 is N-acetyltransferase; sequence GVTLSDPARF…GWVRPEKDKQ (207 aa). Residues R332 and K350 each coordinate UDP-N-acetyl-alpha-D-glucosamine. H362 functions as the Proton acceptor in the catalytic mechanism. UDP-N-acetyl-alpha-D-glucosamine is bound by residues Y365 and N376. Acetyl-CoA is bound by residues A379, 385-386, S404, A422, and R439; that span reads NY.

In the N-terminal section; belongs to the N-acetylglucosamine-1-phosphate uridyltransferase family. The protein in the C-terminal section; belongs to the transferase hexapeptide repeat family. In terms of assembly, homotrimer. It depends on Mg(2+) as a cofactor.

It localises to the cytoplasm. The enzyme catalyses alpha-D-glucosamine 1-phosphate + acetyl-CoA = N-acetyl-alpha-D-glucosamine 1-phosphate + CoA + H(+). The catalysed reaction is N-acetyl-alpha-D-glucosamine 1-phosphate + UTP + H(+) = UDP-N-acetyl-alpha-D-glucosamine + diphosphate. It functions in the pathway nucleotide-sugar biosynthesis; UDP-N-acetyl-alpha-D-glucosamine biosynthesis; N-acetyl-alpha-D-glucosamine 1-phosphate from alpha-D-glucosamine 6-phosphate (route II): step 2/2. It participates in nucleotide-sugar biosynthesis; UDP-N-acetyl-alpha-D-glucosamine biosynthesis; UDP-N-acetyl-alpha-D-glucosamine from N-acetyl-alpha-D-glucosamine 1-phosphate: step 1/1. Its pathway is bacterial outer membrane biogenesis; LPS lipid A biosynthesis. In terms of biological role, catalyzes the last two sequential reactions in the de novo biosynthetic pathway for UDP-N-acetylglucosamine (UDP-GlcNAc). The C-terminal domain catalyzes the transfer of acetyl group from acetyl coenzyme A to glucosamine-1-phosphate (GlcN-1-P) to produce N-acetylglucosamine-1-phosphate (GlcNAc-1-P), which is converted into UDP-GlcNAc by the transfer of uridine 5-monophosphate (from uridine 5-triphosphate), a reaction catalyzed by the N-terminal domain. The protein is Bifunctional protein GlmU of Neisseria meningitidis serogroup C / serotype 2a (strain ATCC 700532 / DSM 15464 / FAM18).